A 268-amino-acid polypeptide reads, in one-letter code: Norsolorinic acid ketoreductase nor1 (268 aa).

NADP(+) contacts are provided by Ile32, Asp79, Asn108, Tyr182, Lys186, Val213, and Thr215. Tyr182 functions as the Proton donor in the catalytic mechanism. The Lowers pKa of active site Tyr role is filled by Lys186.

It belongs to the short-chain dehydrogenases/reductases (SDR) family.

Its subcellular location is the cytoplasm. The protein resides in the cytosol. It localises to the vacuole. The catalysed reaction is (1'S)-averantin + NADP(+) = norsolorinic acid + NADPH + H(+). It functions in the pathway mycotoxin biosynthesis. Functionally, norsolorinic acid ketoreductase; part of the fragmented gene cluster that mediates the biosynthesis of dothistromin (DOTH), a polyketide toxin very similar in structure to the aflatoxin precursor, versicolorin B. The first step of the pathway is the conversion of acetate to norsolorinic acid (NOR) and requires the fatty acid synthase subunits hexA and hexB, as well as the polyketide synthase pksA. PksA combines a hexanoyl starter unit and 7 malonyl-CoA extender units to synthesize the precursor NOR. The hexanoyl starter unit is provided to the acyl-carrier protein (ACP) domain by the fungal fatty acid synthase hexA/hexB. The second step is the conversion of NOR to averantin (AVN) and requires the norsolorinic acid ketoreductase nor1, which catalyzes the dehydration of norsolorinic acid to form (1'S)-averantin. The cytochrome P450 monooxygenase avnA then catalyzes the hydroxylation of AVN to 5'hydroxyaverantin (HAVN). The next step is performed by adhA that transforms HAVN to averufin (AVF). Averufin might then be converted to hydroxyversicolorone by cypX and avfA. Hydroxyversicolorone is further converted versiconal hemiacetal acetate (VHA) by moxY. VHA is then the substrate for the versiconal hemiacetal acetate esterase est1 to yield versiconal (VAL). Versicolorin B synthase vbsA then converts VAL to versicolorin B (VERB) by closing the bisfuran ring. Then, the activity of the versicolorin B desaturase verB leads to versicolorin A (VERA). DotB, a predicted chloroperoxidase, may perform epoxidation of the A-ring of VERA. Alternatively, a cytochrome P450, such as cypX or avnA could catalyze this step. It is also possible that another, uncharacterized, cytochrome P450 enzyme is responsible for this step. Opening of the epoxide could potentially be achieved by the epoxide hydrolase epoA. However, epoA seems not to be required for DOTH biosynthesis, but other epoxide hydrolases may have the ability to complement this hydrolysis. Alternatively, opening of the epoxide ring could be achieved non-enzymatically. The next step is the deoxygenation of ring A to yield the 5,8-dihydroxyanthraquinone which is most likely catalyzed by the NADPH dehydrogenase encoded by ver1. The last stages of DOTH biosynthesis are proposed to involve hydroxylation of the bisfuran. OrdB and norB might have oxidative roles here. An alternative possibility is that cytochrome P450 monoogenases such as avnA and cypX might perform these steps in addition to previously proposed steps. The chain is Norsolorinic acid ketoreductase nor1 from Dothistroma septosporum (strain NZE10 / CBS 128990) (Red band needle blight fungus).